The sequence spans 676 residues: Cysteine-rich receptor-like protein kinase 8 (676 aa).

An N-terminal signal peptide occupies residues 1 to 34 (MYIVSMFGLAGLEALICFIFLFLFSFLTSFKASA). Residues 35-291 (QNPFYLNHDC…IPGKSGNSTV (257 aa)) lie on the Extracellular side of the membrane. Gnk2-homologous domains lie at 38–142 (FYLN…HKNF) and 151–255 (ELIM…LYAF). N-linked (GlcNAc...) asparagine glycans are attached at residues N46, N53, N71, N114, N159, N187, N257, and N288. The chain crosses the membrane as a helical span at residues 292-312 (LVVAIVVLAVLLFIALVGYCF). Residues 313–676 (LAQRTKKTFD…DELITDLYPR (364 aa)) lie on the Cytoplasmic side of the membrane. Residues 353–639 (FAESNKIGRG…TLPVPRQPGF (287 aa)) form the Protein kinase domain. ATP contacts are provided by residues 359-367 (IGRGGFGEV) and K381. Y426 carries the post-translational modification Phosphotyrosine. D478 functions as the Proton acceptor in the catalytic mechanism. The residue at position 482 (S482) is a Phosphoserine. The residue at position 518 (T518) is a Phosphothreonine. Y526 is subject to Phosphotyrosine. Residues 640–666 (FIQSSPVKDPTDSDQSTTTKSTPASID) are disordered. The segment covering 652 to 662 (SDQSTTTKSTP) has biased composition (low complexity).

It belongs to the protein kinase superfamily. Ser/Thr protein kinase family. CRK subfamily.

Its subcellular location is the membrane. It carries out the reaction L-seryl-[protein] + ATP = O-phospho-L-seryl-[protein] + ADP + H(+). It catalyses the reaction L-threonyl-[protein] + ATP = O-phospho-L-threonyl-[protein] + ADP + H(+). This chain is Cysteine-rich receptor-like protein kinase 8 (CRK8), found in Arabidopsis thaliana (Mouse-ear cress).